Here is a 1370-residue protein sequence, read N- to C-terminus: MPYSYTEKKRIRKSFAKREDVQNVPFLLATQLQSYLTFLQAETATADRVNEGLQAAFTSIFPIVSHNGMARLEFVSYALGEPVFDVKECQQRGLTYASPLRAKVRLVLLDREVSKPTIKEVKEQEVYMGEIPLMTTTGSFVINGTERVIVSQLHRSPGVFFEHDRGKTHSSGKLLFSARVIPYRGSWLDFEFDPKDVLFFRVDRRRKMPVTILLKAIGMTPESILAHFFDFDNFELKSEGAMMEFVPERWKGEMARFDITDRAGKVIVEKDKRINAKHLRDLANGGIQRISVPEDFLYGRVLAKNVVDPDTGEVIALANDEITESVLDAMRAAKVLDLQTLYTNDLDRGPYISQTLRTDETVDQTAARVAIYRMMRPGEPPTEEAVEALFQRLFYSEETYDLSRVGRMKVNSRLGRGDDANGPMTLTDEDILETIKVLVELRNGRGQIDDIDHLGNRRVRCVGELAENQFRAGLVRVERAVKERLGQAETENLMPHDLINSKPISAAIKEFFGSSQLSQFMDQTNPLSEITHKRRVSALGPGGLTRERAGFEVRDVHPTHYGRVCPIETPEGPNIGLINSMALYARLNEYGFLETPYRKIIDGRVSDQIDYLSAIEESHYVIAQANAALDAEGRFVDDLVACREAGETMLTSPVNVHYMDVAPSQIVSVAASLIPFLEHDDANRALMGANMQRQAVPCLRPEKPLVGTGIERTVAVDSGTTVQALRGGLVDHVDAERVVIRVNDEENVAGEVGVDIYNLIKYTRSNQNTNINQRPIVKRGDRVAKGDVLADGASTDLGELALGQNMLIAFMPWNGYNFEDSILISERVVADDRYTSVHIEELTVVARDTKLGPEEITRDISNLAETQLNRLDESGIVYIGAEVSADDVLVGKVTPKGETQLTPEEKLLRAIFGEKASDVKDTSLRVPSGMTGTVIDVQVFTREGIVRDKRAQSIIDDELRRYRQDLNDQLRIVENDQFDRIEKLLVGKTVNGGPRKLAKGATVTKAYLADLDRWQWFDIRLSDEPHAVVLEQAKESLEQKRHQFDLAFEEKRKKLTQGDELPPGVLKMIKVYLAVKRRLQPGDKMAGRHGNKGVVSRITPVEDMPHMADGTTADIVLNPLGVPSRMNVGQVLEVHLGWAAKGVGQRIADMLQDERTAQVKNIRAYLEKVYNTTGTGARISELSDEEVIELANNLKRGVPFATPVFDGATEDEITMMLELAYPDDVAKRMQLTPSRAQAWLFDGRTGEKFERPVTIGYMHYLKLHHLVDDKMHARSTGPYSLVTQQPLGGKAQFGGQRFGEMEVWALEAYGASYTLQEMLTVKSDDITGRTKVYENIVKGDHVIDAGMPESFNVLVKEIRSLALDMDLERN.

This sequence belongs to the RNA polymerase beta chain family. The RNAP catalytic core consists of 2 alpha, 1 beta, 1 beta' and 1 omega subunit. When a sigma factor is associated with the core the holoenzyme is formed, which can initiate transcription.

It catalyses the reaction RNA(n) + a ribonucleoside 5'-triphosphate = RNA(n+1) + diphosphate. Its function is as follows. DNA-dependent RNA polymerase catalyzes the transcription of DNA into RNA using the four ribonucleoside triphosphates as substrates. This chain is DNA-directed RNA polymerase subunit beta, found in Bordetella avium (strain 197N).